Consider the following 218-residue polypeptide: Ribonuclease HII (218 aa).

The RNase H type-2 domain occupies 22-211 (VRIAGVDEAG…VRAALESRFS (190 aa)). Positions 28, 29, and 119 each coordinate a divalent metal cation.

The protein belongs to the RNase HII family. Mn(2+) is required as a cofactor. The cofactor is Mg(2+).

It localises to the cytoplasm. The enzyme catalyses Endonucleolytic cleavage to 5'-phosphomonoester.. Endonuclease that specifically degrades the RNA of RNA-DNA hybrids. This chain is Ribonuclease HII, found in Maricaulis maris (strain MCS10) (Caulobacter maris).